A 379-amino-acid polypeptide reads, in one-letter code: Cytochrome b (379 aa).

4 helical membrane-spanning segments follow: residues 33-53 (FGSL…FLAM), 77-98 (WLIR…FIHV), 113-133 (WNIG…GYVL), and 178-198 (FFAF…VHLL). 2 residues coordinate heme b: H83 and H97. Heme b contacts are provided by H182 and H196. H201 contacts a ubiquinone. Helical transmembrane passes span 226–246 (IKDL…ALFF), 288–308 (LGGV…PLLN), 320–340 (ITQT…WIGG), and 347–367 (FTTI…ILMP).

It belongs to the cytochrome b family. As to quaternary structure, the cytochrome bc1 complex contains 11 subunits: 3 respiratory subunits (MT-CYB, CYC1 and UQCRFS1), 2 core proteins (UQCRC1 and UQCRC2) and 6 low-molecular weight proteins (UQCRH/QCR6, UQCRB/QCR7, UQCRQ/QCR8, UQCR10/QCR9, UQCR11/QCR10 and a cleavage product of UQCRFS1). This cytochrome bc1 complex then forms a dimer. Heme b serves as cofactor.

Its subcellular location is the mitochondrion inner membrane. In terms of biological role, component of the ubiquinol-cytochrome c reductase complex (complex III or cytochrome b-c1 complex) that is part of the mitochondrial respiratory chain. The b-c1 complex mediates electron transfer from ubiquinol to cytochrome c. Contributes to the generation of a proton gradient across the mitochondrial membrane that is then used for ATP synthesis. The polypeptide is Cytochrome b (MT-CYB) (Akodon affinis (Colombian grass mouse)).